The chain runs to 153 residues: Putative pre-16S rRNA nuclease (153 aa).

This sequence belongs to the YqgF nuclease family.

It is found in the cytoplasm. In terms of biological role, could be a nuclease involved in processing of the 5'-end of pre-16S rRNA. The sequence is that of Putative pre-16S rRNA nuclease from Prochlorococcus marinus (strain MIT 9301).